The chain runs to 373 residues: Alanine racemase (373 aa).

K37 serves as the catalytic Proton acceptor; specific for D-alanine. Position 37 is an N6-(pyridoxal phosphate)lysine (K37). R135 lines the substrate pocket. Y266 acts as the Proton acceptor; specific for L-alanine in catalysis. Residue M313 participates in substrate binding.

It belongs to the alanine racemase family. Pyridoxal 5'-phosphate serves as cofactor.

The enzyme catalyses L-alanine = D-alanine. It participates in amino-acid biosynthesis; D-alanine biosynthesis; D-alanine from L-alanine: step 1/1. In terms of biological role, catalyzes the interconversion of L-alanine and D-alanine. This organism is able to use both L- and D-alanine as a nitrogen source. May also prevent D-alanine from interfering with the use of L-alanine. In Methanococcus maripaludis (strain DSM 14266 / JCM 13030 / NBRC 101832 / S2 / LL), this protein is Alanine racemase (alr).